The following is a 94-amino-acid chain: Integration host factor subunit beta (94 aa).

It belongs to the bacterial histone-like protein family. In terms of assembly, heterodimer of an alpha and a beta chain.

In terms of biological role, this protein is one of the two subunits of integration host factor, a specific DNA-binding protein that functions in genetic recombination as well as in transcriptional and translational control. The protein is Integration host factor subunit beta of Aeromonas hydrophila subsp. hydrophila (strain ATCC 7966 / DSM 30187 / BCRC 13018 / CCUG 14551 / JCM 1027 / KCTC 2358 / NCIMB 9240 / NCTC 8049).